The following is a 354-amino-acid chain: Serum paraoxonase/arylesterase 2 (354 aa).

A disulfide bridge connects residues Cys42 and Cys352. Residues Glu53 and Asp54 each coordinate Ca(2+). Catalysis depends on His114, which acts as the Proton acceptor. Residues Ile116, Asn167, Asp168, and Asn223 each contribute to the Ca(2+) site. Asn254 is a glycosylation site (N-linked (GlcNAc...) asparagine). Ca(2+)-binding residues include Asp268 and Asn269. N-linked (GlcNAc...) asparagine glycans are attached at residues Asn269 and Asn323.

This sequence belongs to the paraoxonase family. In terms of assembly, homotrimer. Ca(2+) serves as cofactor. In terms of processing, glycosylated. Post-translationally, the signal sequence is not cleaved.

The protein localises to the membrane. It catalyses the reaction a phenyl acetate + H2O = a phenol + acetate + H(+). The enzyme catalyses an N-acyl-L-homoserine lactone + H2O = an N-acyl-L-homoserine + H(+). Its function is as follows. Capable of hydrolyzing lactones and a number of aromatic carboxylic acid esters. This Bos taurus (Bovine) protein is Serum paraoxonase/arylesterase 2 (PON2).